We begin with the raw amino-acid sequence, 161 residues long: Nucleotide-binding protein Veis_3464 (161 aa).

This sequence belongs to the YajQ family.

Nucleotide-binding protein. The protein is Nucleotide-binding protein Veis_3464 of Verminephrobacter eiseniae (strain EF01-2).